The following is a 379-amino-acid chain: Nematocin receptor 1 (379 aa).

At 19 to 48 the chain is on the extracellular side; the sequence is HNLYLFQMLELQENITDSQPMDPPSLEIMM. Asn-32 is a glycosylation site (N-linked (GlcNAc...) asparagine). The helical transmembrane segment at 49 to 69 threads the bilayer; it reads LHHLMIILVTLFGNTLLIYVI. Topologically, residues 70 to 95 are cytoplasmic; it reads YKNNAVLRRKRVTPVQMLMLHMCAAD. The chain crosses the membrane as a helical span at residues 96–116; it reads ILFALISVGPTMAITATVPFF. At 117-124 the chain is on the extracellular side; that stretch reads YGPNLLCK. A disulfide bridge links Cys-123 with Cys-196. The chain crosses the membrane as a helical span at residues 125–145; that stretch reads LTKFLQVIPMYASSFLLVAIS. Residues 146 to 168 are Cytoplasmic-facing; the sequence is ADRYQAICRPLASMKSSIYNRPA. Residues 169 to 189 form a helical membrane-spanning segment; the sequence is LYSGIAWTAAILFSTPQLYLF. The Extracellular segment spans residues 190 to 207; it reads EKRNGDCSENYTTALQYQ. N-linked (GlcNAc...) asparagine glycosylation is present at Asn-199. The chain crosses the membrane as a helical span at residues 208–228; that stretch reads LYVCLFNSVVWLLPSAIAGWL. The Cytoplasmic segment spans residues 229-289; it reads YLCVCKAVWK…DRRRVQTVKL (61 aa). The chain crosses the membrane as a helical span at residues 290-310; sequence TLTIVAANFVLWAPFCITSVI. The Extracellular segment spans residues 311-320; sequence DAVWPTAINS. An N-linked (GlcNAc...) asparagine glycan is attached at Asn-319. A helical membrane pass occupies residues 321–343; it reads TFATYIMFFGNLNSCMNPWLWFH. Residues 344–379 are Cytoplasmic-facing; the sequence is FNRKQLKRACPCRKSSEPLIQSLVYVHVMTSEQSDF.

It belongs to the G-protein coupled receptor 1 family. Vasopressin/oxytocin receptor subfamily. As to expression, detected in the left ASE gustatory neuron, the chemosensory neuron pairs ASH and ADF, and the PQR tail neuron. In males, detected in hook and tail sensory neurons involved in vulval sensing and hermaphrodite contact, and in spicule protractor muscles.

Its subcellular location is the cell membrane. Receptor for nematocin. The activity of this receptor is mediated by G proteins which activate a phosphatidylinositol-calcium second messenger system. The activity of this receptor may be modulated by ntr-2, leading to reduced intracellular cAMP production. Plays a role in gustatory associative learning. Also plays a role in male mating behavior. This Caenorhabditis elegans protein is Nematocin receptor 1.